We begin with the raw amino-acid sequence, 129 residues long: Sulfurtransferase TusD (129 aa).

Cys79 serves as the catalytic Cysteine persulfide intermediate.

The protein belongs to the DsrE/TusD family. In terms of assembly, heterohexamer, formed by a dimer of trimers. The hexameric TusBCD complex contains 2 copies each of TusB, TusC and TusD. The TusBCD complex interacts with TusE.

The protein localises to the cytoplasm. In terms of biological role, part of a sulfur-relay system required for 2-thiolation of 5-methylaminomethyl-2-thiouridine (mnm(5)s(2)U) at tRNA wobble positions. Accepts sulfur from TusA and transfers it in turn to TusE. In Serratia proteamaculans (strain 568), this protein is Sulfurtransferase TusD.